The primary structure comprises 376 residues: S-adenosylmethionine synthase (376 aa).

Histidine 14 is a binding site for ATP. Aspartate 16 is a Mg(2+) binding site. Glutamate 42 is a binding site for K(+). 2 residues coordinate L-methionine: glutamate 55 and glutamine 98. The tract at residues 98–108 (QSPEIALGISS) is flexible loop. Residues 158–160 (DGK), 224–225 (RF), aspartate 233, 239–240 (RK), alanine 256, and lysine 260 contribute to the ATP site. Aspartate 233 contributes to the L-methionine binding site. Lysine 264 provides a ligand contact to L-methionine.

This sequence belongs to the AdoMet synthase family. In terms of assembly, homotetramer; dimer of dimers. It depends on Mg(2+) as a cofactor. Requires K(+) as cofactor.

Its subcellular location is the cytoplasm. It carries out the reaction L-methionine + ATP + H2O = S-adenosyl-L-methionine + phosphate + diphosphate. It functions in the pathway amino-acid biosynthesis; S-adenosyl-L-methionine biosynthesis; S-adenosyl-L-methionine from L-methionine: step 1/1. In terms of biological role, catalyzes the formation of S-adenosylmethionine (AdoMet) from methionine and ATP. The overall synthetic reaction is composed of two sequential steps, AdoMet formation and the subsequent tripolyphosphate hydrolysis which occurs prior to release of AdoMet from the enzyme. This Aquifex aeolicus (strain VF5) protein is S-adenosylmethionine synthase.